The primary structure comprises 428 residues: Cytochrome c biogenesis protein CcsB (428 aa).

Helical transmembrane passes span 14 to 34 (LRFA…GTFI), 72 to 92 (SFWF…CSFR), and 162 to 182 (IGPL…AYGS).

This sequence belongs to the Ccs1/CcsB family. As to quaternary structure, may interact with CcsA.

It localises to the cellular thylakoid membrane. In terms of biological role, required during biogenesis of c-type cytochromes (cytochrome c6 and cytochrome f) at the step of heme attachment. The polypeptide is Cytochrome c biogenesis protein CcsB (Prochlorococcus marinus (strain AS9601)).